Here is a 110-residue protein sequence, read N- to C-terminus: Snake venom vascular endothelial growth factor toxin HF (110 aa).

Glutamine 1 carries the post-translational modification Pyrrolidone carboxylic acid. Intrachain disulfides connect cysteine 14–cysteine 56, cysteine 45–cysteine 91, and cysteine 49–cysteine 93.

This sequence belongs to the PDGF/VEGF growth factor family. Snake venom VEGF subfamily. As to quaternary structure, homodimer; disulfide-linked. Interacts with VEGF receptor-2 (KDR) with high affinity. In terms of tissue distribution, expressed by the venom gland.

It is found in the secreted. Snake venom VEGFs that may contribute to venom dispersion and prey subjugation by inducing vascular permeability and hypotension. This protein induces an increase in capillary permeability after intradermal injection, as well as a drastic hypotensive effect after intravenous injection. The hypotension is mediated by nitric oxide (NO), which is produced by VEGF-activated endothelium NO synthase. Also induces angiogenesis in vitro, probably through VEGF receptor (KDR/VEGFR-2) signaling. The polypeptide is Snake venom vascular endothelial growth factor toxin HF (Vipera aspis aspis (Aspic viper)).